The primary structure comprises 456 residues: Bifunctional protein GlmU (456 aa).

Positions 1–229 (MYKSAVILAA…PDEIKGVNSR (229 aa)) are pyrophosphorylase. Residues 8–11 (LAAG), lysine 22, glutamine 73, and 78–79 (GT) contribute to the UDP-N-acetyl-alpha-D-glucosamine site. Aspartate 103 contacts Mg(2+). Glycine 140, glutamate 155, asparagine 170, and asparagine 227 together coordinate UDP-N-acetyl-alpha-D-glucosamine. Mg(2+) is bound at residue asparagine 227. The tract at residues 230-250 (GQLAEAEEILRLRINERHMEN) is linker. Residues 251-456 (GVTLIDPKNT…GWVAKKGLKK (206 aa)) form an N-acetyltransferase region. UDP-N-acetyl-alpha-D-glucosamine is bound by residues arginine 332 and lysine 350. The active-site Proton acceptor is histidine 362. UDP-N-acetyl-alpha-D-glucosamine-binding residues include tyrosine 365 and asparagine 376. Residues 385–386 (NY), alanine 422, and arginine 439 contribute to the acetyl-CoA site.

In the N-terminal section; belongs to the N-acetylglucosamine-1-phosphate uridyltransferase family. This sequence in the C-terminal section; belongs to the transferase hexapeptide repeat family. In terms of assembly, homotrimer. It depends on Mg(2+) as a cofactor.

It is found in the cytoplasm. The catalysed reaction is alpha-D-glucosamine 1-phosphate + acetyl-CoA = N-acetyl-alpha-D-glucosamine 1-phosphate + CoA + H(+). The enzyme catalyses N-acetyl-alpha-D-glucosamine 1-phosphate + UTP + H(+) = UDP-N-acetyl-alpha-D-glucosamine + diphosphate. It functions in the pathway nucleotide-sugar biosynthesis; UDP-N-acetyl-alpha-D-glucosamine biosynthesis; N-acetyl-alpha-D-glucosamine 1-phosphate from alpha-D-glucosamine 6-phosphate (route II): step 2/2. It participates in nucleotide-sugar biosynthesis; UDP-N-acetyl-alpha-D-glucosamine biosynthesis; UDP-N-acetyl-alpha-D-glucosamine from N-acetyl-alpha-D-glucosamine 1-phosphate: step 1/1. Its pathway is bacterial outer membrane biogenesis; LPS lipid A biosynthesis. Catalyzes the last two sequential reactions in the de novo biosynthetic pathway for UDP-N-acetylglucosamine (UDP-GlcNAc). The C-terminal domain catalyzes the transfer of acetyl group from acetyl coenzyme A to glucosamine-1-phosphate (GlcN-1-P) to produce N-acetylglucosamine-1-phosphate (GlcNAc-1-P), which is converted into UDP-GlcNAc by the transfer of uridine 5-monophosphate (from uridine 5-triphosphate), a reaction catalyzed by the N-terminal domain. This is Bifunctional protein GlmU from Clostridium novyi (strain NT).